Reading from the N-terminus, the 463-residue chain is Sodium-coupled neutral amino acid transporter 7 (463 aa).

The residue at position 28 (serine 28) is a Phosphoserine. Helical transmembrane passes span 56-76, 82-102, 130-150, 179-199, 206-226, 240-260, 283-303, 320-340, 372-392, 396-416, and 429-449; these read AVFI…PAAF, VAAG…GLVI, LCEV…LIII, FTIS…KEIG, FLSV…YIWP, ASWM…QCHV, AAMV…FLTF, VAVA…YPIL, VLQT…IPDI, ISVI…LCLI, and ASWW…AFIF.

The protein belongs to the amino acid/polyamine transporter 2 family. Interacts with the mTORC1 complex; this interaction mediates the recruitment of mTORC1 to the lysosome and its subsequent activation. Highly expressed in the brain, including the hippocampus, especially in the granular layer of dentate gyrus cells and the pyramidal cell layer of the hippocampus, amygdala, thalamus, hypothalamus, in the layer of Purkinje cells in the cerebellum and the layers of cortex. Particularly strong expression in neurons of the ventromedial hypothalamus, basolateral amygdala, ventral tegmental area, and locus coeruleus. Not detected in glial cells, including astrocytes. In addition to brain, also expressed in the spinal cord (at protein level).

Its subcellular location is the lysosome membrane. The protein localises to the cell projection. It is found in the axon. It carries out the reaction L-glutamine(in) + Na(+)(in) = L-glutamine(out) + Na(+)(out). It catalyses the reaction L-asparagine(in) + Na(+)(in) = L-asparagine(out) + Na(+)(out). Its function is as follows. Symporter that selectively cotransports sodium ions and amino acids, such as L-glutamine and L-asparagine from the lysosome into the cytoplasm and may participates in mTORC1 activation. The transport activity requires an acidic lysosomal lumen. The protein is Sodium-coupled neutral amino acid transporter 7 of Mus musculus (Mouse).